We begin with the raw amino-acid sequence, 233 residues long: uncharacterized protein (233 aa).

The segment covering Met1–Leu10 has biased composition (basic residues). The tract at residues Met1–Arg90 is disordered. A compositionally biased stretch (basic and acidic residues) spans Lys11–Glu56. Over residues Lys76–Gly85 the composition is skewed to basic residues. The RRM domain occupies Val92–Gly171. 2 stretches are compositionally biased toward basic and acidic residues: residues Met194 to Ala216 and Ile224 to Gln233. Residues Met194 to Gln233 are disordered.

Its subcellular location is the nucleus. The protein resides in the nucleolus. This is an uncharacterized protein from Schizosaccharomyces pombe (strain 972 / ATCC 24843) (Fission yeast).